Consider the following 57-residue polypeptide: Potassium channel toxin alpha-KTx 17.2 (57 aa).

Residues 1–26 form the signal peptide; sequence MKTIIVLLLLTIVAAAVVESSPKARR. Cystine bridges form between Cys30–Cys46, Cys36–Cys51, and Cys40–Cys53.

It belongs to the short scorpion toxin superfamily. Potassium channel inhibitor family. Alpha-KTx 17 subfamily. As to expression, expressed by the venom gland.

The protein localises to the secreted. Its function is as follows. Inhibits voltage-gated potassium channels. The sequence is that of Potassium channel toxin alpha-KTx 17.2 from Lychas mucronatus (Chinese swimming scorpion).